Here is a 66-residue protein sequence, read N- to C-terminus: MSETNKNAFQAGQAAGKAEEKSNVLLDKAKDAAAAAGASAQQAGKSISDAAVGGVNFVKDKTGLNK.

Over residues 1–10 the composition is skewed to polar residues; the sequence is MSETNKNAFQ. Positions 1–20 are disordered; that stretch reads MSETNKNAFQAGQAAGKAEE. Repeats lie at residues 31-35 and 49-53; these read DAAAA and DAAVG.

Interacts with DEK3. As to expression, expressed at high levels in embryos and mature seeds.

This chain is Stress-induced protein KIN2, found in Arabidopsis thaliana (Mouse-ear cress).